A 339-amino-acid polypeptide reads, in one-letter code: Probable cytosolic iron-sulfur protein assembly protein CIAO1 (339 aa).

WD repeat units lie at residues His-14 to Lys-53, Gly-59 to Val-98, Gly-103 to Cys-142, Ser-148 to Cys-187, Gly-192 to Gly-231, Phe-250 to Gln-289, and Ala-301 to Leu-339. The LYR motif; required for interaction with HSC20 signature appears at Leu-176–Gln-178.

It belongs to the WD repeat CIA1 family. As to quaternary structure, component of the CIA complex. Interacts with CIAO2A and forms a complex with CIAO2B and MMS19; the interactions with CIAO2A and CIAO2B are mutually exclusive. Interacts with CHD1L, ERCC2, IREB2 and POLD1. Component of the MMXD complex, which includes CIAO1, ERCC2, CIAO2B, MMS19 and SLC25A5. Interacts with WT1. Interacts with CIAO3. Interacts (via LYR motif) with HSC20.

The protein resides in the cytoplasm. Key component of the cytosolic iron-sulfur protein assembly (CIA) complex, a multiprotein complex that mediates the incorporation of iron-sulfur cluster into extramitochondrial Fe/S proteins. As a CIA complex component, interacts specifically with CIAO2A or CIAO2B and MMS19 to assist different branches of iron-sulfur protein assembly, depending of its interactors. The complex CIAO1:CIAO2B:MMS19 binds to and facilitates the assembly of most cytosolic-nuclear Fe/S proteins. CIAO1:CIAO2A specifically matures ACO1 and stabilizes IREB2. Seems to specifically modulate the transactivation activity of WT1. As part of the mitotic spindle-associated MMXD complex it may play a role in chromosome segregation. The sequence is that of Probable cytosolic iron-sulfur protein assembly protein CIAO1 from Rattus norvegicus (Rat).